The sequence spans 792 residues: Probable exo-1,4-beta-xylosidase xlnD (792 aa).

The N-terminal stretch at 1–20 (MSVAKSIAAVLVALLPGALA) is a signal peptide. N-linked (GlcNAc...) asparagine glycosylation is found at Asn-23, Asn-87, Asn-118, Asn-142, and Asn-246. Residue Asp-310 is part of the active site. 8 N-linked (GlcNAc...) asparagine glycosylation sites follow: Asn-326, Asn-385, Asn-404, Asn-440, Asn-477, Asn-518, Asn-679, and Asn-701.

Belongs to the glycosyl hydrolase 3 family.

The protein localises to the secreted. It catalyses the reaction Hydrolysis of (1-&gt;4)-beta-D-xylans, to remove successive D-xylose residues from the non-reducing termini.. It participates in glycan degradation; xylan degradation. Functionally, xylan 1,4-beta-xylosidase involved in the hydrolysis of xylan, a major structural heterogeneous polysaccharide found in plant biomass representing the second most abundant polysaccharide in the biosphere, after cellulose. This Aspergillus fumigatus (strain ATCC MYA-4609 / CBS 101355 / FGSC A1100 / Af293) (Neosartorya fumigata) protein is Probable exo-1,4-beta-xylosidase xlnD (xlnD).